The primary structure comprises 336 residues: D-alanine--D-alanine ligase (336 aa).

An ATP-grasp domain is found at 124–330 (KMWFSALGIP…FTEYLSLVIN (207 aa)). 154 to 209 (ALENWGSIFVKAASQGSSVGCYKVDDSSKVAGVLKDAFGYAPYVIVEKTIKARELE) serves as a coordination point for ATP. Residues aspartate 284, glutamate 297, and asparagine 299 each contribute to the Mg(2+) site.

The protein belongs to the D-alanine--D-alanine ligase family. The cofactor is Mg(2+). Mn(2+) is required as a cofactor.

The protein localises to the cytoplasm. The catalysed reaction is 2 D-alanine + ATP = D-alanyl-D-alanine + ADP + phosphate + H(+). The protein operates within cell wall biogenesis; peptidoglycan biosynthesis. In terms of biological role, cell wall formation. In Shewanella sp. (strain MR-4), this protein is D-alanine--D-alanine ligase.